The chain runs to 139 residues: MDTIGYHYVVEAAGCDPEVIADPNKIREIFLEAAKVGNMEVKASYFFKFSPMGVSGVVIVAESHISVHTWPEKGYAALDVYTCGEKADPEKAVDYILEKFKAKYAHVSELKRGIEEEDSTFTHTILTWEEKLDRRNGNK.

Catalysis depends on Ser63, which acts as the Schiff-base intermediate with substrate; via pyruvic acid. Position 63 is a pyruvic acid (Ser); by autocatalysis (Ser63). The active-site Proton acceptor; for processing activity is the His68. Cys83 serves as the catalytic Proton donor; for catalytic activity.

This sequence belongs to the prokaryotic AdoMetDC family. Type 1 subfamily. In terms of assembly, heterotetramer of two alpha and two beta chains arranged as a dimer of alpha/beta heterodimers. Pyruvate serves as cofactor. In terms of processing, is synthesized initially as an inactive proenzyme. Formation of the active enzyme involves a self-maturation process in which the active site pyruvoyl group is generated from an internal serine residue via an autocatalytic post-translational modification. Two non-identical subunits are generated from the proenzyme in this reaction, and the pyruvate is formed at the N-terminus of the alpha chain, which is derived from the carboxyl end of the proenzyme. The post-translation cleavage follows an unusual pathway, termed non-hydrolytic serinolysis, in which the side chain hydroxyl group of the serine supplies its oxygen atom to form the C-terminus of the beta chain, while the remainder of the serine residue undergoes an oxidative deamination to produce ammonia and the pyruvoyl group blocking the N-terminus of the alpha chain.

It carries out the reaction S-adenosyl-L-methionine + H(+) = S-adenosyl 3-(methylsulfanyl)propylamine + CO2. It participates in amine and polyamine biosynthesis; S-adenosylmethioninamine biosynthesis; S-adenosylmethioninamine from S-adenosyl-L-methionine: step 1/1. Functionally, catalyzes the decarboxylation of S-adenosylmethionine to S-adenosylmethioninamine (dcAdoMet), the propylamine donor required for the synthesis of the polyamines spermine and spermidine from the diamine putrescine. In Pyrococcus furiosus (strain ATCC 43587 / DSM 3638 / JCM 8422 / Vc1), this protein is S-adenosylmethionine decarboxylase proenzyme.